Reading from the N-terminus, the 419-residue chain is Indole prenyltransferase tdiB (419 aa).

Pro-58–Ser-59 contributes to the L-tryptophan binding site. Substrate is bound by residues Arg-81, Lys-165, Tyr-167, Arg-236, Lys-238, Tyr-240, Tyr-330, and Tyr-394.

It belongs to the tryptophan dimethylallyltransferase family.

It catalyses the reaction didemethylasterriquinone D + dimethylallyl diphosphate = asterriquinone C1 + diphosphate. The protein operates within secondary metabolite biosynthesis. Functionally, indole prenyltransferase; part of the gene cluster that mediates the biosynthesis of terrequinone A, an antitumor agent. The first step in the biosynthetic pathway for terrequinone A is formation of indole pyruvic acid (IPA) from L-tryptophan by the aminotransferase tdiD. The nonribosomal peptide synthase tdiA then immediately converts unstable IPA to didemethylasterriquinone D (DDAQ D), via condensation of 2 IPA molecules. The symmetric connectivity of the 2 IPA molecules is thought to arise by head-to-tail dual Claisen condensations facilitated by the TE domain. TdiB then catalyzes reverse prenylation by transferring dimethylallyl diphosphate to carbon atom 2' of DDAQ D, to yield asterriquinone C-1. Finally, tdiC and tdiE enzymes robustly convert asterriquinone C-1 to terrequinone A via a transformation involving regular prenylation at carbon atom 5, which requires elimination of the hydroxy group on C-5. This chain is Indole prenyltransferase tdiB, found in Emericella nidulans (strain FGSC A4 / ATCC 38163 / CBS 112.46 / NRRL 194 / M139) (Aspergillus nidulans).